A 361-amino-acid chain; its full sequence is DNA replication and repair protein RecF (361 aa).

An ATP-binding site is contributed by 30 to 37 (GPNGSGKT).

The protein belongs to the RecF family.

It localises to the cytoplasm. Functionally, the RecF protein is involved in DNA metabolism; it is required for DNA replication and normal SOS inducibility. RecF binds preferentially to single-stranded, linear DNA. It also seems to bind ATP. The polypeptide is DNA replication and repair protein RecF (Erwinia tasmaniensis (strain DSM 17950 / CFBP 7177 / CIP 109463 / NCPPB 4357 / Et1/99)).